Reading from the N-terminus, the 252-residue chain is uncharacterized protein (252 aa).

A helical membrane pass occupies residues leucine 80 to alanine 100.

The protein localises to the host membrane. It is found in the virion. This is an uncharacterized protein from Acanthamoeba polyphaga mimivirus (APMV).